The sequence spans 671 residues: Anaphase-promoting complex subunit cut9 (671 aa).

The segment at 1 to 24 (MVVKRTQTDSRMQSTPGNHNHPDA) is disordered. TPR repeat units follow at residues 83–114 (REDY…LDIT), 117–142 (PNDA…LLTK), 150–173 (SACR…LNLL), 198–229 (LEAS…ALMV), 234–257 (YEAF…LVLK), 268–296 (AAFL…DYLS), 306–334 (DLLL…ILEI), 341–368 (VYPL…LVDR), 373–402 (AVTW…SSTM), 407–435 (GPAW…TAAR), 442–470 (LPYL…SYAL), 475–507 (PLLL…LVKK), 513–545 (KPWA…GLLL), and 550–579 (ANVH…SLAI). The tract at residues 622–643 (NLNTSDKSMSMEDQSGKVTESV) is disordered.

In terms of assembly, the APC/C is composed of at least 13 subunits: apc1, apc2, nuc2, apc4, apc5, cut9, apc8, apc10, apc11, hcn1, apc13, apc14 and apc15. Homodimer. Interacts directly with nuc2 and hcn1. Phosphorylated.

The protein localises to the nucleus. Component of the anaphase-promoting complex/cyclosome (APC/C), a cell cycle-regulated E3 ubiquitin-protein ligase complex that controls progression through mitosis and the G1 phase of the cell cycle. The APC/C is thought to confer substrate specificity and, in the presence of ubiquitin-conjugating E2 enzymes, it catalyzes the formation of protein-ubiquitin conjugates that are subsequently degraded by the 26S proteasome. May play a pivotal role in the control of anaphase. The sequence is that of Anaphase-promoting complex subunit cut9 (cut9) from Schizosaccharomyces pombe (strain 972 / ATCC 24843) (Fission yeast).